A 59-amino-acid chain; its full sequence is MAVPKKRTSMSKKRIRKNLWKKKTYFSIVQSYSLAKSRSFSRGNEHPKPKGFSGQQANK.

Positions 37–59 are disordered; it reads SRSFSRGNEHPKPKGFSGQQANK.

The protein belongs to the bacterial ribosomal protein bL32 family.

It is found in the plastid. Its subcellular location is the chloroplast. This chain is Large ribosomal subunit protein bL32c (rpl32), found in Zea mays (Maize).